A 429-amino-acid chain; its full sequence is Glutamate-1-semialdehyde 2,1-aminomutase (429 aa).

N6-(pyridoxal phosphate)lysine is present on lysine 270.

Belongs to the class-III pyridoxal-phosphate-dependent aminotransferase family. HemL subfamily. In terms of assembly, homodimer. Pyridoxal 5'-phosphate is required as a cofactor.

Its subcellular location is the cytoplasm. It catalyses the reaction (S)-4-amino-5-oxopentanoate = 5-aminolevulinate. The protein operates within porphyrin-containing compound metabolism; protoporphyrin-IX biosynthesis; 5-aminolevulinate from L-glutamyl-tRNA(Glu): step 2/2. The chain is Glutamate-1-semialdehyde 2,1-aminomutase from Cupriavidus pinatubonensis (strain JMP 134 / LMG 1197) (Cupriavidus necator (strain JMP 134)).